Here is a 259-residue protein sequence, read N- to C-terminus: Thiazole synthase (259 aa).

Catalysis depends on lysine 100, which acts as the Schiff-base intermediate with DXP. 1-deoxy-D-xylulose 5-phosphate is bound by residues glycine 161, 187 to 188, and 209 to 210; these read AG and NT.

Belongs to the ThiG family. Homotetramer. Forms heterodimers with either ThiH or ThiS.

The protein resides in the cytoplasm. It carries out the reaction [ThiS sulfur-carrier protein]-C-terminal-Gly-aminoethanethioate + 2-iminoacetate + 1-deoxy-D-xylulose 5-phosphate = [ThiS sulfur-carrier protein]-C-terminal Gly-Gly + 2-[(2R,5Z)-2-carboxy-4-methylthiazol-5(2H)-ylidene]ethyl phosphate + 2 H2O + H(+). It participates in cofactor biosynthesis; thiamine diphosphate biosynthesis. In terms of biological role, catalyzes the rearrangement of 1-deoxy-D-xylulose 5-phosphate (DXP) to produce the thiazole phosphate moiety of thiamine. Sulfur is provided by the thiocarboxylate moiety of the carrier protein ThiS. In vitro, sulfur can be provided by H(2)S. This Methylobacillus flagellatus (strain ATCC 51484 / DSM 6875 / VKM B-1610 / KT) protein is Thiazole synthase.